The following is a 690-amino-acid chain: Methionine--tRNA ligase (690 aa).

The 'HIGH' region motif lies at 12 to 22 (PYANGPLHLGH). Zn(2+) is bound by residues C144, C147, C157, and C160. A 'KMSKS' region motif is present at residues 333–337 (QFSKS). Position 336 (K336) interacts with ATP. Residues 535–632 (KKINIDLMVG…VNADDGSRMK (98 aa)) form the tRNA-binding domain.

It belongs to the class-I aminoacyl-tRNA synthetase family. MetG type 1 subfamily. As to quaternary structure, homodimer. Requires Zn(2+) as cofactor.

It is found in the cytoplasm. The catalysed reaction is tRNA(Met) + L-methionine + ATP = L-methionyl-tRNA(Met) + AMP + diphosphate. In terms of biological role, is required not only for elongation of protein synthesis but also for the initiation of all mRNA translation through initiator tRNA(fMet) aminoacylation. In Picrophilus torridus (strain ATCC 700027 / DSM 9790 / JCM 10055 / NBRC 100828 / KAW 2/3), this protein is Methionine--tRNA ligase.